The chain runs to 514 residues: Exoglucanase 1 (514 aa).

The N-terminal stretch at 1–17 (MYQKLALISAFLATARA) is a signal peptide. A catalytic region spans residues 18–453 (QSACTLQAET…GSTGNSSGGN (436 aa)). Intrachain disulfides connect Cys-21/Cys-89, Cys-36/Cys-42, Cys-67/Cys-88, Cys-78/Cys-84, Cys-155/Cys-414, Cys-189/Cys-227, Cys-193/Cys-226, Cys-247/Cys-273, Cys-255/Cys-260, and Cys-278/Cys-348. Asn-62 and Asn-81 each carry an N-linked (GlcNAc...) asparagine glycan. Glu-229 (nucleophile) is an active-site residue. Glu-234 serves as the catalytic Proton donor. N-linked (GlcNAc...) asparagine glycosylation is present at Asn-287. Disordered stretches follow at residues 401–427 (NETSSTPGAVRGSCSTSSGVPAQLESN) and 444–481 (GSTGNSSGGNPPGGNPPGTTTTRRPATSTGSSPGPTQT). The segment at 454-478 (PPGGNPPGTTTTRRPATSTGSSPGP) is linker. A compositionally biased stretch (low complexity) spans 460–479 (PGTTTTRRPATSTGSSPGPT). The CBM1 domain occupies 478-514 (PTQTHYGQCGGIGYSGPTVCASGSTCQVLNPYYSQCL). 2 cysteine pairs are disulfide-bonded: Cys-486–Cys-503 and Cys-497–Cys-513.

The protein belongs to the glycosyl hydrolase 7 (cellulase C) family.

The catalysed reaction is Hydrolysis of (1-&gt;4)-beta-D-glucosidic linkages in cellulose and cellotetraose, releasing cellobiose from the non-reducing ends of the chains.. In terms of biological role, the biological conversion of cellulose to glucose generally requires three types of hydrolytic enzymes: (1) Endoglucanases which cut internal beta-1,4-glucosidic bonds; (2) Exocellobiohydrolases that cut the disaccharide cellobiose from the non-reducing end of the cellulose polymer chain; (3) Beta-1,4-glucosidases which hydrolyze the cellobiose and other short cello-oligosaccharides to glucose. This is Exoglucanase 1 (cbh1) from Hypocrea rufa (Trichoderma viride).